The primary structure comprises 497 residues: Vacuolar-processing enzyme (497 aa).

Positions 1–31 are cleaved as a signal peptide; sequence METHKSLLFFTNYVLFLVFTLSFLPIPGLLA. Residue His180 is part of the active site. Cys222 acts as the Nucleophile in catalysis. A disulfide bridge links Cys255 with Cys269. N-linked (GlcNAc...) asparagine glycans are attached at residues Asn320 and Asn374. Disulfide bonds link Cys433/Cys463 and Cys445/Cys480.

Belongs to the peptidase C13 family.

Functionally, asparagine-specific endopeptidase involved in the processing of vacuolar seed protein precursors into the mature forms. In Ricinus communis (Castor bean), this protein is Vacuolar-processing enzyme.